The following is a 514-amino-acid chain: Deoxynucleoside triphosphate triphosphohydrolase SAMHD1 homolog (514 aa).

The interval 1–24 (MNNTFKYVNEDVSGTEGEESDYDP) is disordered. K80 is a binding site for GTP. An a 2'-deoxyribonucleoside 5'-triphosphate-binding site is contributed by N83. 101 to 109 (DTEQFQRLR) contributes to the GTP binding site. Substrate is bound by residues Q113 and R128. The HD domain occupies 128-259 (RFEHSIGVSH…SVDVDKFDYL (132 aa)). Zn(2+) is bound by residues H131, H170, and D171. Position 174 (H174) interacts with substrate. The active site involves H196. Residues 252–258 (DVDKFDY), Y258, and D262 contribute to the substrate site. D254 serves as a coordination point for Zn(2+). Residues R276, 291–293 (LSK), and N297 contribute to the a 2'-deoxyribonucleoside 5'-triphosphate site. Residues R305 and 309 to 314 (HKLVYT) contribute to the substrate site. A 2'-deoxyribonucleoside 5'-triphosphate-binding residues include H315 and K316. R380 and K384 together coordinate GTP.

It belongs to the SAMHD1 family. As to quaternary structure, homodimer; in absence of GTP and dNTP. Homotetramer; in GTP- and dNTP-bound form. It depends on Zn(2+) as a cofactor.

The enzyme catalyses a 2'-deoxyribonucleoside 5'-triphosphate + H2O = a 2'-deoxyribonucleoside + triphosphate + H(+). Its activity is regulated as follows. Allosterically activated and regulated via the combined actions of GTP and dNTPs (dATP, dGTP, dTTP and dCTP): Allosteric site 1 binds GTP, while allosteric site 2 binds dNTP. Allosteric activation promotes the formation of highly active homotetramers. Its function is as follows. Has deoxynucleoside triphosphate (dNTPase) activity. The polypeptide is Deoxynucleoside triphosphate triphosphohydrolase SAMHD1 homolog (Dictyostelium discoideum (Social amoeba)).